Reading from the N-terminus, the 401-residue chain is Homeobox protein engrailed-1 (401 aa).

Disordered stretches follow at residues 1–102 (MEEQ…PAAQ), 138–167 (GGGAAAGGGSRVERDRGQTGAGRDPVHSLG), 229–253 (SKPSDSGGGSGGNAGSPGAQGAKFP), and 293–315 (RPSSGPRTRKLKKKKNEKEDKRP). Residues 13 to 48 (DSGLGAVAAAAPSGLSLSLSPGASGSSGSDGDSVPV) show a composition bias toward low complexity. Pro residues-rich tracts occupy residues 49–64 (SPQPAPPSPPAAPCLP) and 73–88 (PPHPPPPPPPPPPPPQ). Low complexity predominate over residues 89-102 (HLAAPAHQPQPAAQ). 2 stretches are compositionally biased toward gly residues: residues 138–147 (GGGAAAGGGS) and 234–243 (SGGGSGGNAG). The segment at residues 312 to 371 (DKRPRTAFTAEQLQRLKAEFQANRYITEQRRQTLAQELSLNESQIKIWFQNKRAKIKKAT) is a DNA-binding region (homeobox).

It belongs to the engrailed homeobox family.

The protein resides in the nucleus. In terms of biological role, required for proper formation of the apical ectodermal ridge and correct dorsal-ventral patterning in the limb. This is Homeobox protein engrailed-1 (En1) from Mus musculus (Mouse).